Reading from the N-terminus, the 85-residue chain is Small ribosomal subunit protein bS16 (85 aa).

Belongs to the bacterial ribosomal protein bS16 family.

The protein is Small ribosomal subunit protein bS16 of Pelobacter propionicus (strain DSM 2379 / NBRC 103807 / OttBd1).